The primary structure comprises 579 residues: Type II methyltransferase M.BseCI (579 aa).

The protein belongs to the N(4)/N(6)-methyltransferase family.

It catalyses the reaction a 2'-deoxyadenosine in DNA + S-adenosyl-L-methionine = an N(6)-methyl-2'-deoxyadenosine in DNA + S-adenosyl-L-homocysteine + H(+). A gamma subtype methylase, recognizes the double-stranded sequence 5'-ATCGAT-3', methylation on A-5 on both strands, and protects the DNA from cleavage by the BanIII endonuclease. The sequence is that of Type II methyltransferase M.BseCI from Geobacillus stearothermophilus (Bacillus stearothermophilus).